The primary structure comprises 498 residues: Lysine--tRNA ligase (498 aa).

Positions 409 and 416 each coordinate Mg(2+).

The protein belongs to the class-II aminoacyl-tRNA synthetase family. In terms of assembly, homodimer. Requires Mg(2+) as cofactor.

It localises to the cytoplasm. It carries out the reaction tRNA(Lys) + L-lysine + ATP = L-lysyl-tRNA(Lys) + AMP + diphosphate. The polypeptide is Lysine--tRNA ligase (Dichelobacter nodosus (strain VCS1703A)).